The primary structure comprises 329 residues: Flotillin-like protein FloA (329 aa).

2 consecutive transmembrane segments (helical) span residues Phe6–Ile26 and Gly27–Met47.

The protein belongs to the flotillin-like FloA family. Homooligomerizes.

The protein resides in the cell membrane. It is found in the membrane raft. In terms of biological role, found in functional membrane microdomains (FMM) that may be equivalent to eukaryotic membrane rafts. FMMs are highly dynamic and increase in number as cells age. Flotillins are thought to be important factors in membrane fluidity. This Staphylococcus aureus (strain USA300) protein is Flotillin-like protein FloA.